The chain runs to 978 residues: MTTQYMGDSIEDFQVLDLLGKGGFACVYRGRCLATGQEVAIKMIDKKAMRTAGMVNRVCNEVEIHCRLKHPSILELYTYFEDDNYVYLVLELAENGEANRYLRKQGHTLKESEVRRIMLQVVKGVLYLHSHGIIHRDLSLGNILLSSDMDAKIADFGLATRLSLPDEKHYTMCGTPNYISPEIATRDPHGLESDVWSIGCMLFTLLVGKPPFDTEAVRSTLNKVVLAEYDIPNHVSIEARDLISKLLKKNPQDRLTLSGILDHPFITNQTLNTKYSSPTRQHLNPRAYENSLDSGTGTMATISTGHAPFQQDNRHAVKSSSAERTSDIWPRDPKHPPSPPVRQRPSSCPSTENVTTGSSSHVRGSDVAQPAQYSGLKTRTSDSWLSDIHSSKIPKLPQKPLVGLDKMNGIQSKFKSYNATKYSSYYGSTLGDILHLAGQQNGTNTSSSGFYSADTKSYSANHGLKTSSTDHNNKESCQTRDNHMYEKSIEQPSATKSEHSRAYSSQDSRPHSHHKRHGSDSVSKDFDASPQPSQGESRRRQNHRSDSERQTRRAEKSRSGGRDKSLGELTEPLNAERLRPIRQKTRNAVVSITDEAEVCLEFLQQKGGQSIVTEVIRIASNGMKISVYQPSEAEKVLGSEPPLPPSAGNGSYLFPSLPSKYWKKYKYAAKFVQLVRKLTPKVTLYSKHAKCVLMENYPHADFEVCFYNGAKVHQSQECTRIIEPGGVSYTLESVGGIEGVPVEMRKLIQHVKAAYQQCVRLERIIMQEEKESNGNQYFPFIVGRRPPAWKNSSGKSEKQDQQGCSNGQSQPVLPSSPSIAAPAMTSLLSFDGTIASTAQTTNPAFPGKSRKTSPSKTSRHKQSPAQPIPAEVANAKTDPSPHHYVEGSSPIPSAHVCKMAFVDGVGWSSQLTTGEVWIQYTDGSQIIFHAAAAAIKFTDSTGNVTRYGYADRLPSVIKEKLSHLPAVIKTLATTSKVS.

Residues 13–266 (FQVLDLLGKG…LSGILDHPFI (254 aa)) enclose the Protein kinase domain. Residues 19–27 (LGKGGFACV) and Lys-42 each bind ATP. Asp-137 functions as the Proton acceptor in the catalytic mechanism. 2 stretches are compositionally biased toward polar residues: residues 271 to 282 (LNTKYSSPTRQH) and 291 to 304 (SLDS…TIST). 4 disordered regions span residues 271-381 (LNTK…TRTS), 489-578 (IEQP…AERL), 788-818 (AWKN…SSPS), and 838-869 (AQTT…QPIP). Residues 324–335 (RTSDIWPRDPKH) are compositionally biased toward basic and acidic residues. 2 stretches are compositionally biased toward polar residues: residues 351–362 (TENVTTGSSSHV) and 371–381 (AQYSGLKTRTS). Basic and acidic residues-rich tracts occupy residues 518–527 (GSDSVSKDFD) and 536–566 (ESRR…DKSL). Residues 565-678 (SLGELTEPLN…AKFVQLVRKL (114 aa)) enclose the Cryptic POLO box 1 (CPB1) domain. The region spanning 679-792 (TPKVTLYSKH…GRRPPAWKNS (114 aa)) is the Cryptic POLO box 2 (CPB2) domain. The span at 801 to 818 (QQGCSNGQSQPVLPSSPS) shows a compositional bias: polar residues. Over residues 848–862 (KSRKTSPSKTSRHKQ) the composition is skewed to basic residues. A POLO box domain is found at 895-973 (HVCKMAFVDG…LPAVIKTLAT (79 aa)).

Belongs to the protein kinase superfamily. Ser/Thr protein kinase family. CDC5/Polo subfamily. As to quaternary structure, homodimer. Post-translationally, ubiquitinated; leading to its degradation by the proteasome.

The protein resides in the cytoplasm. The protein localises to the cytoskeleton. It is found in the microtubule organizing center. Its subcellular location is the centrosome. It localises to the centriole. It carries out the reaction L-seryl-[protein] + ATP = O-phospho-L-seryl-[protein] + ADP + H(+). The catalysed reaction is L-threonyl-[protein] + ATP = O-phospho-L-threonyl-[protein] + ADP + H(+). Serine/threonine-protein kinase that plays a central role in centriole duplication. Able to trigger procentriole formation on the surface of the mother centriole cylinder, leading to the recruitment of centriole biogenesis proteins. When overexpressed, it is able to induce centrosome amplification through the simultaneous generation of multiple procentrioles adjoining each parental centriole during S phase. The protein is Serine/threonine-protein kinase PLK4 of Nematostella vectensis (Starlet sea anemone).